Here is a 918-residue protein sequence, read N- to C-terminus: Rap guanine nucleotide exchange factor 3 (918 aa).

Phosphoserine is present on serine 79. Positions 110-186 (ATYPTLIRDR…RDAQFYRFPG (77 aa)) constitute a DEP domain. Residues 218–242 (TVALRKPPGQRTDEELDLIFEELLH) form an interaction with PDE3B region. Residues 311-314 (GQLA) and 321-322 (RA) contribute to the 3',5'-cyclic AMP site. Positions 369–388 (TSQGAGPSRPPTPGRNRYTV) are disordered. The N-terminal Ras-GEF domain occupies 384–521 (NRYTVMSGTP…EQYPERRRHH (138 aa)). An interaction with PDE3B region spans residues 398–422 (ELLLEAMRPDSSAHDPTETFLSDFL). Phosphoserine occurs at positions 531 and 859. The 220-residue stretch at 665–884 (SAKDLAGQLT…SRISTCSEQS (220 aa)) folds into the Ras-GEF domain.

As to quaternary structure, interacts with PDE3B and PIK3R6; form a signaling complex that regulates phosphatidylinositol 3-kinase gamma in angiogenesis.

Its subcellular location is the cytoplasm. It is found in the membrane. In terms of biological role, guanine nucleotide exchange factor (GEF) for RAP1A and RAP2A small GTPases that is activated by binding cAMP. Through simultaneous binding of PDE3B to RAPGEF3 and PIK3R6 is assembled in a signaling complex in which it activates the PI3K gamma complex and which is involved in angiogenesis. Plays a role in the modulation of the cAMP-induced dynamic control of endothelial barrier function through a pathway that is independent on Rho-mediated signaling. Required for the actin rearrangement at cell-cell junctions, such as stress fibers and junctional actin. This Mus musculus (Mouse) protein is Rap guanine nucleotide exchange factor 3 (Rapgef3).